The chain runs to 208 residues: Predicted GPI-anchored protein 37 (208 aa).

The signal sequence occupies residues 1-18 (MLFTQLIILLTVTSQALS). The interval 33–93 (TKRLGGGSRG…SSSSSGSRNW (61 aa)) is disordered. The segment covering 36–53 (LGGGSRGGSSSGSRGGSS) has biased composition (gly residues). The span at 54-63 (SGSSSGSSSG) shows a compositional bias: low complexity. Residue asparagine 173 is glycosylated (N-linked (GlcNAc...) asparagine). Serine 185 carries GPI-anchor amidated serine lipidation. Residues 186–208 (SSLNIPSTHFYLIGFAAAYSIVL) constitute a propeptide, removed in mature form.

It belongs to the PGA37 family.

Its subcellular location is the cell membrane. Predicted GPI-anchored protein which may have a role during host infection. This chain is Predicted GPI-anchored protein 37 (PGA37), found in Candida albicans (strain SC5314 / ATCC MYA-2876) (Yeast).